A 77-amino-acid chain; its full sequence is Large ribosomal subunit protein uL29 (77 aa).

Belongs to the universal ribosomal protein uL29 family.

This is Large ribosomal subunit protein uL29 from Mycobacterium avium (strain 104).